Consider the following 261-residue polypeptide: Zinc finger protein 664 (261 aa).

9 C2H2-type zinc fingers span residues 3 to 25, 31 to 53, 59 to 81, 87 to 109, 115 to 137, 143 to 165, 171 to 193, 199 to 221, and 227 to 249; these read YKCP…QKVH, HKCD…WRDH, YKCD…KKIH, YKCY…MRVH, YVCS…QRVH, FKCE…QRVH, YKCY…QRVH, YRCC…QRVH, and FKCD…QRVH. Lys257 participates in a covalent cross-link: Glycyl lysine isopeptide (Lys-Gly) (interchain with G-Cter in SUMO2).

This sequence belongs to the krueppel C2H2-type zinc-finger protein family. Expressed in the organ of Corti, stria vascularis, auditory nerve and retina. Lower levels in the tongue, cerebellum, small intestine and kidney.

The protein resides in the nucleus. Its function is as follows. May be involved in transcriptional regulation. The polypeptide is Zinc finger protein 664 (ZNF664) (Cavia porcellus (Guinea pig)).